A 680-amino-acid polypeptide reads, in one-letter code: DNA-directed RNA polymerase subunit beta' (680 aa).

Residues Cys-69, Cys-71, Cys-87, and Cys-90 each coordinate Zn(2+). Mg(2+)-binding residues include Asp-489, Asp-491, and Asp-493.

It belongs to the RNA polymerase beta' chain family. RpoC1 subfamily. In plastids the minimal PEP RNA polymerase catalytic core is composed of four subunits: alpha, beta, beta', and beta''. When a (nuclear-encoded) sigma factor is associated with the core the holoenzyme is formed, which can initiate transcription. Requires Mg(2+) as cofactor. It depends on Zn(2+) as a cofactor.

Its subcellular location is the plastid. It is found in the chloroplast. It carries out the reaction RNA(n) + a ribonucleoside 5'-triphosphate = RNA(n+1) + diphosphate. In terms of biological role, DNA-dependent RNA polymerase catalyzes the transcription of DNA into RNA using the four ribonucleoside triphosphates as substrates. The protein is DNA-directed RNA polymerase subunit beta' of Arabis hirsuta (Hairy rock-cress).